An 81-amino-acid polypeptide reads, in one-letter code: Tissue- and phase-specific nuclear protein (81 aa).

Expressed in oviduct, where expression levels are higher in uterine sections than in tuba sections. No expression detected in small intestine and liver (at protein level).

It localises to the nucleus. The protein is Tissue- and phase-specific nuclear protein of Podarcis siculus (Italian wall lizard).